Consider the following 467-residue polypeptide: UDP-N-acetylmuramate--L-alanine ligase (467 aa).

Glycine 112–threonine 118 serves as a coordination point for ATP.

The protein belongs to the MurCDEF family.

Its subcellular location is the cytoplasm. The catalysed reaction is UDP-N-acetyl-alpha-D-muramate + L-alanine + ATP = UDP-N-acetyl-alpha-D-muramoyl-L-alanine + ADP + phosphate + H(+). It participates in cell wall biogenesis; peptidoglycan biosynthesis. Functionally, cell wall formation. This Polaromonas sp. (strain JS666 / ATCC BAA-500) protein is UDP-N-acetylmuramate--L-alanine ligase.